A 418-amino-acid polypeptide reads, in one-letter code: Homoaconitase large subunit (418 aa).

[4Fe-4S] cluster-binding residues include C292, C352, and C355.

The protein belongs to the aconitase/IPM isomerase family. In terms of assembly, heterodimer of HacA and HacB. It depends on [4Fe-4S] cluster as a cofactor.

It catalyses the reaction (2R,3S)-homoisocitrate = cis-homoaconitate + H2O. Its pathway is amino-acid biosynthesis; L-lysine biosynthesis via AAA pathway; L-alpha-aminoadipate from 2-oxoglutarate: step 3/5. With respect to regulation, is not inhibited by lysine. Its function is as follows. Catalyzes the reversible hydration of cis-homoaconitate ((Z)-but-1-ene-1,2,4-tricarboxylate) to homoisocitrate ((1R,2S)-1-hydroxybutane-1,2,4-tricarboxylate). Can catalyze neither the dehydration of (R)-homocitrate ((2R)-2-hydroxybutane-1,2,4-tricarboxylate) into cis-homoaconitate in vitro, nor the reverse reaction. Is not active toward (S)-homocitrate, cis-aconitate or citrate as substrate. The sequence is that of Homoaconitase large subunit (hacA) from Thermus thermophilus (strain ATCC BAA-163 / DSM 7039 / HB27).